We begin with the raw amino-acid sequence, 486 residues long: MQLTQLLALALSLATSEAAYKGFNYGDKKPDGSSKYQADFASEFETAQNLVGAPGFTSARLYTMIQAGTANDPISAIPAAIAQNTSLLLGLWASGNNMNNELTALKAAISQYGEDLSKLVVGISVGSEDLYRNSVLGQKVNAGVGVDPHVLASYIEEVRSTISGTPLSGAPLGHVDTWNDWVNGSNAAVIDAVDWVGFDGYPYFQNTMANSIDDAKALFNEAVAKTKSAAGNKEVWITETGWPVSGKTENLAVASIPNAKRFWDEVGCPLFDNTNTWWYTLQDAFGASVPNPSFGIVGSTLTTQPLFDLSCSKSNTTSSSAIASPTSTAAAAGGVAGGSTGSASGSSTGTGSSSGSGSNSNTGAASGAVGAADRETSGTSGSANTNGTSGSGSGSNSTSGHGSNVTVPTRPTSVSNVSPSKSSSALFTGAATSMGASPSSVGNVGPSKSSGAASPSSTTMFTGAATSVSAPVVHVVLLALMMVIAA.

The first 18 residues, 1-18, serve as a signal peptide directing secretion; that stretch reads MQLTQLLALALSLATSEA. An N-linked (GlcNAc...) asparagine glycan is attached at N84. E128 functions as the Proton donor in the catalytic mechanism. The N-linked (GlcNAc...) asparagine glycan is linked to N183. E239 functions as the Nucleophile in the catalytic mechanism. N-linked (GlcNAc...) asparagine glycosylation is found at N315, N386, N396, and N404. A disordered region spans residues 330-458; it reads AAAGGVAGGS…SSGAASPSST (129 aa). 2 stretches are compositionally biased toward low complexity: residues 341-404 and 413-424; these read GSAS…HGSN and SVSNVSPSKSSS. Over residues 430–442 the composition is skewed to polar residues; sequence AATSMGASPSSVG. Residues 445–458 show a composition bias toward low complexity; sequence GPSKSSGAASPSST. The GPI-anchor amidated glycine moiety is linked to residue G463. Positions 464–486 are cleaved as a propeptide — removed in mature form; the sequence is AATSVSAPVVHVVLLALMMVIAA.

It belongs to the glycosyl hydrolase 17 family. Post-translationally, the GPI-anchor is attached to the protein in the endoplasmic reticulum and serves to target the protein to the cell surface. There, the glucosamine-inositol phospholipid moiety is cleaved off and the GPI-modified mannoprotein is covalently attached via its lipidless GPI glycan remnant to the 1,6-beta-glucan of the outer cell wall layer.

The protein localises to the cell membrane. It localises to the secreted. The protein resides in the cell wall. It carries out the reaction Hydrolysis of (1-&gt;3)-beta-D-glucosidic linkages in (1-&gt;3)-beta-D-glucans.. Its function is as follows. Glucanases play a role in cell expansion during growth, in cell-cell fusion during mating, and in spore release during sporulation. This enzyme may be involved in beta-glucan degradation and also function biosynthetically as a transglycosylase. The protein is Probable glucan endo-1,3-beta-glucosidase eglC (eglC) of Aspergillus terreus (strain NIH 2624 / FGSC A1156).